Here is an 864-residue protein sequence, read N- to C-terminus: Carbohydrate-responsive element-binding protein (864 aa).

Disordered stretches follow at residues 15 to 41 (PRVVPSPDSDSDTDLEDPSPRRSAGGL) and 53 to 77 (MVSSPHSDSLTRRRDQEGPVGLADF). Phosphoserine occurs at positions 20, 23, and 25. Position 27 is a phosphothreonine (T27). Position 196 is a phosphoserine (S196). Disordered regions lie at residues 332–397 (SSGI…APGP), 449–468 (PGVSTLPAPTTFVPTPQPGP), 489–533 (PHFT…TARD), 547–570 (PEQALEPPTMPGTLLRPPESPQDT), and 583–602 (PIPAPTPPRPPPGPATLAPP). Positions 351 to 368 (GMTPHSGNTRLQARNSCS) are enriched in polar residues. Positions 513–531 (ASPPTLASATASPTATATA) are enriched in low complexity. S566 bears the Phosphoserine; by AMPK mark. Over residues 583-596 (PIPAPTPPRPPPGP) the composition is skewed to pro residues. S614, S626, and S643 each carry phosphoserine. The bHLH domain occupies 661-715 (NRRITHISAEQKRRFNIKLGFDTLHGLVSTLSAQPSLKVSKATTLQKTAEYILML). The interval 715 to 736 (LQQERAAMQEEAQQLRDEIEEL) is leucine-zipper.

Binds DNA as a heterodimer with TCFL4/MLX. In terms of processing, phosphorylation at Ser-566 by AMPK inactivates the DNA-binding activity. In terms of tissue distribution, expressed in the ventricular and intermediate zones of the developing spinal cord of 12.5 dpc embryos. In later embryos expressed in a variety of tissues.

It is found in the nucleus. Transcriptional repressor. Binds to the canonical and non-canonical E box sequences 5'-CACGTG-3'. This is Carbohydrate-responsive element-binding protein (Mlxipl) from Mus musculus (Mouse).